We begin with the raw amino-acid sequence, 375 residues long: Trans-enoyl reductase cghC (375 aa).

Residue 48–51 coordinates NADP(+); it reads VDTK. 135 to 142 is a substrate binding site; sequence NAWYTSGW. Residues 188-191, 211-214, and 276-277 each bind NADP(+); these read SSST, SARN, and LD. 297–301 serves as a coordination point for substrate; the sequence is GPELV. Position 366–367 (366–367) interacts with NADP(+); sequence VS.

This sequence belongs to the zinc-containing alcohol dehydrogenase family. Monomer.

The catalysed reaction is (2S,4S)-4-hydroxy-4-methylglutamate + 8 malonyl-CoA + 3 S-adenosyl-L-methionine + ATP + 8 NADPH + 11 H(+) = (2S)-3-[(2S)-3,5-dioxo-4-[(2E,4R,6R,8E,10E,12E)-4,6,12-trimethyltetradeca-2,8,10,12-tetraenoyl]pyrrolidin-2-yl]-2-hydroxy-2-methylpropanoate + AMP + 3 S-adenosyl-L-homocysteine + 8 CO2 + diphosphate + 8 NADP(+) + 8 CoA + 6 H2O. Its pathway is secondary metabolite biosynthesis. In terms of biological role, trans-enoyl reductase; part of the gene cluster that mediates the biosynthesis of the tetramic acid Sch210972, a potential anti-HIV fungal natural product that contains a decalin core. The PKS module of cghG together with the enoylreductase cghC catalyze the formation of the polyketide unit which is then conjugated to 4-hydroxyl-4-methyl glutamate (HMG) by the condensation domain of the cghG NRPS module. One unique structural feature of Sch210972 is the tetramic acid motif proposed to be derived from the non-proteinogenic amino acid HMG, by a Dieckmann-type condensation catalyzed by the reductase domain of cghG. The aldolase cghB catalyzes the aldol condensation of 2 molecules of pyruvic acid to yield the intermediate 4-hydroxyl-4-methyl-2-oxoglutarate (HMOG), which can then be stereoselectively transaminated by an unidentified enzyme to form HMG. The Diels-Alderase cghA then uses the Dieckmann product released by cghG as substrate and catalyzes the Diels-Alder cycloaddition to form the decalin ring of Sch210972. CghA also suppresses the nonenzymatic formation of the alternative stereoisomer. The polypeptide is Trans-enoyl reductase cghC (Chaetomium globosum (strain ATCC 6205 / CBS 148.51 / DSM 1962 / NBRC 6347 / NRRL 1970) (Soil fungus)).